Reading from the N-terminus, the 61-residue chain is uncharacterized protein (61 aa).

This is an uncharacterized protein from Staphylococcus epidermidis.